The following is a 311-amino-acid chain: Homeobox protein Hox-B1a (311 aa).

Residues 217–276 (QNTIRTNFTTKQLTELEKEFHFSKYLTRARRVEIAATLELNETQVKIWFQNRRMKQKKRE) constitute a DNA-binding region (homeobox). The tract at residues 267–311 (NRRMKQKKREKEGLAPASSTSSKDLEDQSDHSTSTSPEASPSPDS) is disordered. Over residues 298–311 (STSTSPEASPSPDS) the composition is skewed to low complexity.

It belongs to the Antp homeobox family. Labial subfamily.

Its subcellular location is the nucleus. Sequence-specific transcription factor which is part of a developmental regulatory system that provides cells with specific positional identities on the anterior-posterior axis. In Danio rerio (Zebrafish), this protein is Homeobox protein Hox-B1a (hoxb1a).